The sequence spans 382 residues: UDP-4-amino-4-deoxy-L-arabinose--oxoglutarate aminotransferase (382 aa).

K183 is modified (N6-(pyridoxal phosphate)lysine).

Belongs to the DegT/DnrJ/EryC1 family. ArnB subfamily. In terms of assembly, homodimer. Pyridoxal 5'-phosphate serves as cofactor.

The catalysed reaction is UDP-4-amino-4-deoxy-beta-L-arabinose + 2-oxoglutarate = UDP-beta-L-threo-pentopyranos-4-ulose + L-glutamate. The protein operates within nucleotide-sugar biosynthesis; UDP-4-deoxy-4-formamido-beta-L-arabinose biosynthesis; UDP-4-deoxy-4-formamido-beta-L-arabinose from UDP-alpha-D-glucuronate: step 2/3. It participates in bacterial outer membrane biogenesis; lipopolysaccharide biosynthesis. Catalyzes the conversion of UDP-4-keto-arabinose (UDP-Ara4O) to UDP-4-amino-4-deoxy-L-arabinose (UDP-L-Ara4N). The modified arabinose is attached to lipid A and is required for resistance to polymyxin and cationic antimicrobial peptides. This is UDP-4-amino-4-deoxy-L-arabinose--oxoglutarate aminotransferase from Pseudomonas aeruginosa (strain ATCC 15692 / DSM 22644 / CIP 104116 / JCM 14847 / LMG 12228 / 1C / PRS 101 / PAO1).